The sequence spans 453 residues: 3-phosphoshikimate 1-carboxyvinyltransferase (453 aa).

Positions 1-27 (MSHDSEPQPVTATPGGPLNGSLKPPGD) are disordered. The 3-phosphoshikimate site is built by Lys28, Ser29, and Arg33. Lys28 is a phosphoenolpyruvate binding site. Phosphoenolpyruvate-binding residues include Gly101 and Arg129. Residues Ser175, Gln177, Asp330, and Lys357 each coordinate 3-phosphoshikimate. A phosphoenolpyruvate-binding site is contributed by Gln177. Residue Asp330 is the Proton acceptor of the active site. Residues Arg361 and Arg405 each coordinate phosphoenolpyruvate.

Belongs to the EPSP synthase family. In terms of assembly, monomer.

Its subcellular location is the cytoplasm. The catalysed reaction is 3-phosphoshikimate + phosphoenolpyruvate = 5-O-(1-carboxyvinyl)-3-phosphoshikimate + phosphate. It functions in the pathway metabolic intermediate biosynthesis; chorismate biosynthesis; chorismate from D-erythrose 4-phosphate and phosphoenolpyruvate: step 6/7. Functionally, catalyzes the transfer of the enolpyruvyl moiety of phosphoenolpyruvate (PEP) to the 5-hydroxyl of shikimate-3-phosphate (S3P) to produce enolpyruvyl shikimate-3-phosphate and inorganic phosphate. The sequence is that of 3-phosphoshikimate 1-carboxyvinyltransferase from Methylorubrum extorquens (strain CM4 / NCIMB 13688) (Methylobacterium extorquens).